Reading from the N-terminus, the 145-residue chain is MLLPKRVKHRRQFRGSMAGKATRGNKITNGEFGIVATEPCWIKSNQIEAARVAMTRYIKRGGKVFIKIFPDKPVTGKPIGVRMGKGKGNLECWVAVVKPGRVMFEISGVAEETAREALRLATHKLPCKCKIVSRADLEGGDNSEN.

It belongs to the universal ribosomal protein uL16 family. As to quaternary structure, part of the 50S ribosomal subunit.

Functionally, binds 23S rRNA and is also seen to make contacts with the A and possibly P site tRNAs. This is Large ribosomal subunit protein uL16 from Lachnospira eligens (strain ATCC 27750 / DSM 3376 / VPI C15-48 / C15-B4) (Eubacterium eligens).